A 506-amino-acid chain; its full sequence is Tubby protein homolog (506 aa).

Positions 36-244 are disordered; that stretch reads QKQKKKRQEP…PSPTAPEQPV (209 aa). Composition is skewed to low complexity over residues 70 to 87 and 101 to 116; these read LVES…QVQE and PTAP…AATA. A compositionally biased stretch (acidic residues) spans 196–206; it reads FDEDEEDEEEN. Low complexity-rich tracts occupy residues 207–221 and 230–243; these read SSSS…RPSS and EAAS…PEQP.

It belongs to the TUB family. In terms of assembly, interacts with GNAQ. Interacts with TULP1.

It is found in the cytoplasm. The protein localises to the nucleus. The protein resides in the secreted. Its subcellular location is the cell membrane. In terms of biological role, functions in signal transduction from heterotrimeric G protein-coupled receptors. Binds to membranes containing phosphatidylinositol 4,5-bisphosphate. Can bind DNA (in vitro). May contribute to the regulation of transcription in the nucleus. Could be involved in the hypothalamic regulation of body weight. Contribute to stimulation of phagocytosis of apoptotic retinal pigment epithelium (RPE) cells and macrophages. In Homo sapiens (Human), this protein is Tubby protein homolog (TUB).